Here is a 375-residue protein sequence, read N- to C-terminus: Coproporphyrin III ferrochelatase (375 aa).

2 residues coordinate Fe-coproporphyrin III: serine 59 and tyrosine 128. Residues histidine 191 and glutamate 286 each coordinate Fe(2+).

It belongs to the ferrochelatase family.

It is found in the cytoplasm. The enzyme catalyses Fe-coproporphyrin III + 2 H(+) = coproporphyrin III + Fe(2+). Its pathway is porphyrin-containing compound metabolism; protoheme biosynthesis. In terms of biological role, involved in coproporphyrin-dependent heme b biosynthesis. Catalyzes the insertion of ferrous iron into coproporphyrin III to form Fe-coproporphyrin III. The protein is Coproporphyrin III ferrochelatase of Streptomyces coelicolor (strain ATCC BAA-471 / A3(2) / M145).